Here is a 1200-residue protein sequence, read N- to C-terminus: Ice nucleation protein (1200 aa).

Residues 176–1151 are octapeptide periodicity; the sequence is ATYGSTLSGD…LSAGEDSILI (976 aa).

Belongs to the bacterial ice nucleation protein family.

The protein resides in the cell outer membrane. In terms of biological role, ice nucleation proteins enable bacteria to nucleate crystallization in supercooled water. The polypeptide is Ice nucleation protein (inaZ) (Pseudomonas syringae pv. syringae).